Consider the following 735-residue polypeptide: Protein PAT1 homolog 2 (735 aa).

Disordered stretches follow at residues Thr-39–Lys-93 and Gln-336–Tyr-366. 2 stretches are compositionally biased toward basic and acidic residues: residues Glu-49–Lys-59 and Pro-67–Lys-93. A compositionally biased stretch (low complexity) spans Ser-346–Arg-356.

Belongs to the PAT1 family. As to quaternary structure, interacts with ribonucleoprotein complex components. Interacts with cpeb.

The protein resides in the cytoplasm. The protein localises to the nucleus. Functionally, RNA-binding protein that acts as a translational repressor. In Xenopus tropicalis (Western clawed frog), this protein is Protein PAT1 homolog 2 (patl2).